Consider the following 154-residue polypeptide: Myoglobin (154 aa).

Residues 2–148 enclose the Globin domain; sequence GLSDGEWQLV…FRNDIAAKYK (147 aa). Residue serine 4 is modified to Phosphoserine. Histidine 65 contacts nitrite. Histidine 65 lines the O2 pocket. Threonine 68 is subject to Phosphothreonine. Histidine 94 is a binding site for heme b.

In terms of assembly, monomer.

The protein localises to the cytoplasm. The protein resides in the sarcoplasm. The catalysed reaction is Fe(III)-heme b-[protein] + nitric oxide + H2O = Fe(II)-heme b-[protein] + nitrite + 2 H(+). It carries out the reaction H2O2 + AH2 = A + 2 H2O. In terms of biological role, monomeric heme protein which primary function is to store oxygen and facilitate its diffusion within muscle tissues. Reversibly binds oxygen through a pentacoordinated heme iron and enables its timely and efficient release as needed during periods of heightened demand. Depending on the oxidative conditions of tissues and cells, and in addition to its ability to bind oxygen, it also has a nitrite reductase activity whereby it regulates the production of bioactive nitric oxide. Under stress conditions, like hypoxia and anoxia, it also protects cells against reactive oxygen species thanks to its pseudoperoxidase activity. The protein is Myoglobin of Hystrix cristata (North African crested porcupine).